An 865-amino-acid chain; its full sequence is MIKAIIGKIIGTRNDRWIKQYKKKVLAINTLEPTYEKMSDTELQNAFEELKKRVRSVEKDLQEKTLLEVLPESFAITREASKRVLNMCHFDVQLIGGMVLNDGKIAEMKTGEGKTLVATLAVALNAMKGESVYVVTVNDYLAHRDSKEMEPLYHFLGYSVGTITASVRDDDERLEIYSKDIVYGTNNEFGFDYLRDNMKYSLEHKVQKSHAFAIVDEVDSILIDEARTPLIISGPVNRRMENYNKADEVAKSMQVEVDFTIDEKNRAILITEEGIKKAENLFGVDNLYKIENATLSHHLDQALKANYLFFIDKDYIVANNEVVIVDEFTGRLSEGRRFSEGLHQALEAKEGVSIKEESQTLADITFQNYFRMFSKLSGMTGTAQTEATEFLEIYNLEVVSIPTNLAIKRKDLNDLIYKSEKEKFDAVILKIKELHDKGQPVLVGTASIEKSETLHALLKKERIPHTVLNAKQHTKEAEIIKDAGLKGAVTIATNMAGRGVDIKLTDEIKELGGLYIIGTERHESRRIDNQLRGRSGRQGDPGVSQFYLSLEDNLLRIFGSDRIKGVMEKLGLKDGEHIESKLVTRAVENAQKKVENLHFESRKHLLEYDDVANEQRKSVYKFRDELLDVNYDISVKIAENREYALNQIFSKLKAFDNQNLSKEELLGLKNILKEDFNTNIELENLEQADSIENFVAEKLKNDYENKMKALDSEQRSRIERIVYLQILDNAWREHLYTMDNLKTGINLRGYNQKDPLVEYKKESYNLFLELIEDIKVEAIKTFSKIQFENEQDSSDAERYLDNFSEEREHESVTYRHEEALDEDLNAAIKVFSKTPKRNEPCPCGSGKKYKDCCAKSGPKKGLFAK.

ATP contacts are provided by residues Q93, 111–115 (GEGKT), and D501. Positions 841, 843, 852, and 853 each coordinate Zn(2+).

This sequence belongs to the SecA family. As to quaternary structure, monomer and homodimer. Part of the essential Sec protein translocation apparatus which comprises SecA, SecYEG and auxiliary proteins SecDF-YajC and YidC. Zn(2+) serves as cofactor.

The protein localises to the cell inner membrane. It localises to the cytoplasm. It carries out the reaction ATP + H2O + cellular proteinSide 1 = ADP + phosphate + cellular proteinSide 2.. Part of the Sec protein translocase complex. Interacts with the SecYEG preprotein conducting channel. Has a central role in coupling the hydrolysis of ATP to the transfer of proteins into and across the cell membrane, serving as an ATP-driven molecular motor driving the stepwise translocation of polypeptide chains across the membrane. The chain is Protein translocase subunit SecA from Helicobacter acinonychis (strain Sheeba).